The primary structure comprises 367 residues: MNLADKVLAVNNDLPIRTDSPVHSGKVRSVYWLTATDSKRLIEEKGYDVPSDTSLAIMVISDRISAFDCIWSGENDMRGVPGKGAALNAISNHWFKMFKEQGLADSHILDIPHPFVWIVQKAKPVMIEAICRQYITGSMWRSYTKGERDFCGIELPEGLAKDSKLTSLLQTPSTKGILEGIPGVPAVDDVNITRKNIEDNFEAFNFKSVDDIARYEKLLTEGFDVISTALSKIDQVFVDTKFEFGYVKDVNGDDKLIYMDEVGTPDSSRIWDGEQYRAGKVVENSKEGFRQLLLNHFPDADILLNKDRMSEREALARDNKLPLSVLMDVSKTYTDIAEKITGNKIVLSDNPKAEIIAILREQYQLID.

It belongs to the SAICAR synthetase family.

It carries out the reaction 5-amino-1-(5-phospho-D-ribosyl)imidazole-4-carboxylate + L-aspartate + ATP = (2S)-2-[5-amino-1-(5-phospho-beta-D-ribosyl)imidazole-4-carboxamido]succinate + ADP + phosphate + 2 H(+). It participates in purine metabolism; IMP biosynthesis via de novo pathway; 5-amino-1-(5-phospho-D-ribosyl)imidazole-4-carboxamide from 5-amino-1-(5-phospho-D-ribosyl)imidazole-4-carboxylate: step 1/2. In Colwellia psychrerythraea (strain 34H / ATCC BAA-681) (Vibrio psychroerythus), this protein is Phosphoribosylaminoimidazole-succinocarboxamide synthase.